A 277-amino-acid polypeptide reads, in one-letter code: Urease accessory protein UreD (277 aa).

It belongs to the UreD family. In terms of assembly, ureD, UreF and UreG form a complex that acts as a GTP-hydrolysis-dependent molecular chaperone, activating the urease apoprotein by helping to assemble the nickel containing metallocenter of UreC. The UreE protein probably delivers the nickel.

It is found in the cytoplasm. Its function is as follows. Required for maturation of urease via the functional incorporation of the urease nickel metallocenter. This chain is Urease accessory protein UreD, found in Pseudomonas entomophila (strain L48).